The sequence spans 74 residues: UPF0154 protein LVIS_1358 (74 aa).

The helical transmembrane segment at 4 to 24 (WIWILIVIVVGLACAAGGFYG) threads the bilayer.

Belongs to the UPF0154 family.

The protein localises to the cell membrane. The polypeptide is UPF0154 protein LVIS_1358 (Levilactobacillus brevis (strain ATCC 367 / BCRC 12310 / CIP 105137 / JCM 1170 / LMG 11437 / NCIMB 947 / NCTC 947) (Lactobacillus brevis)).